The chain runs to 313 residues: VVVITGASSGLGLAAAKALAETGKWHVVMACRDFLKASKAAKAAGMADGSYTVMHLDLASLDSVRQFVDAFRRAEMPLDVLVCNAAIYRPTARKPTFTAEGVEMSVGVNHLGHFLLARLLLEDLQKSDYPSRRLVIVGSITGNDNTLAGNVPPKANLGDLRGLAGGLTGASGSAMIDGDESFDGAKAYKDSKVCNMLTMQEFHRRYHEDTGITFSSLYPGCIATTGLFREHIPLFRTLFPPFQKFVTKGFVSEAESGKRLAQVVGEPSLTKSGVYWSWNKDSASFENQLSQEASDPEKARKVWELSEKLVGLA.

Belongs to the short-chain dehydrogenases/reductases (SDR) family. POR subfamily.

The protein resides in the plastid. It is found in the chloroplast. The enzyme catalyses chlorophyllide a + NADP(+) = protochlorophyllide a + NADPH + H(+). It functions in the pathway porphyrin-containing compound metabolism; chlorophyll biosynthesis. Phototransformation of protochlorophyllide (Pchlide) to chlorophyllide (Chlide). This Avena sativa (Oat) protein is Protochlorophyllide reductase.